Reading from the N-terminus, the 550-residue chain is Methionine--tRNA ligase (550 aa).

Positions 13–23 match the 'HIGH' region motif; the sequence is PYANGPLHFGH. Zn(2+)-binding residues include C145, C148, C158, and C161. A 'KMSKS' region motif is present at residues 331 to 335; the sequence is QFSKS. K334 is a binding site for ATP.

The protein belongs to the class-I aminoacyl-tRNA synthetase family. MetG type 1 subfamily. Monomer. It depends on Zn(2+) as a cofactor.

The protein localises to the cytoplasm. The catalysed reaction is tRNA(Met) + L-methionine + ATP = L-methionyl-tRNA(Met) + AMP + diphosphate. In terms of biological role, is required not only for elongation of protein synthesis but also for the initiation of all mRNA translation through initiator tRNA(fMet) aminoacylation. The polypeptide is Methionine--tRNA ligase (Chlamydia trachomatis serovar A (strain ATCC VR-571B / DSM 19440 / HAR-13)).